An 840-amino-acid chain; its full sequence is Probable alpha-glucuronidase A (840 aa).

Positions 1 to 19 (MWSGIPVFALLSSIGIAAA) are cleaved as a signal peptide. Residues Asn-50, Asn-149, Asn-222, Asn-262, Asn-279, Asn-310, Asn-465, Asn-527, Asn-576, Asn-610, Asn-682, Asn-723, and Asn-732 are each glycosylated (N-linked (GlcNAc...) asparagine).

Belongs to the glycosyl hydrolase 67 family.

The protein localises to the secreted. It catalyses the reaction an alpha-D-glucuronoside + H2O = D-glucuronate + an alcohol. Its function is as follows. Alpha-glucuronidase involved in the hydrolysis of xylan, a major structural heterogeneous polysaccharide found in plant biomass representing the second most abundant polysaccharide in the biosphere, after cellulose. Releases 4-O-methylglucuronic acid from xylan. This chain is Probable alpha-glucuronidase A (aguA), found in Neosartorya fischeri (strain ATCC 1020 / DSM 3700 / CBS 544.65 / FGSC A1164 / JCM 1740 / NRRL 181 / WB 181) (Aspergillus fischerianus).